Reading from the N-terminus, the 603-residue chain is Adenine deaminase 1 (603 aa).

The protein belongs to the metallo-dependent hydrolases superfamily. Adenine deaminase family. Mn(2+) serves as cofactor.

The catalysed reaction is adenine + H2O + H(+) = hypoxanthine + NH4(+). The sequence is that of Adenine deaminase 1 from Carboxydothermus hydrogenoformans (strain ATCC BAA-161 / DSM 6008 / Z-2901).